Consider the following 28-residue polypeptide: Antibacterial protein LC3 (28 aa).

Antibacterial activity against X.campestris, especially strain G, and P.solacearum PO1. This Bacillus subtilis protein is Antibacterial protein LC3.